Here is a 208-residue protein sequence, read N- to C-terminus: Small ribosomal subunit protein uS4 (208 aa).

The region spanning 98-161 (QRLDNVVYRM…KTNSQILRAI (64 aa)) is the S4 RNA-binding domain.

Belongs to the universal ribosomal protein uS4 family. In terms of assembly, part of the 30S ribosomal subunit. Contacts protein S5. The interaction surface between S4 and S5 is involved in control of translational fidelity.

Its function is as follows. One of the primary rRNA binding proteins, it binds directly to 16S rRNA where it nucleates assembly of the body of the 30S subunit. With S5 and S12 plays an important role in translational accuracy. In Sulfurovum sp. (strain NBC37-1), this protein is Small ribosomal subunit protein uS4.